The following is a 58-amino-acid chain: Small ribosomal subunit protein bS21 (58 aa).

It belongs to the bacterial ribosomal protein bS21 family.

The polypeptide is Small ribosomal subunit protein bS21 (Streptococcus pyogenes serotype M49 (strain NZ131)).